Consider the following 125-residue polypeptide: Small ribosomal subunit protein uS12m (125 aa).

The disordered stretch occupies residues 1–24 (MPTSNQSIRHGREKKRRTDRTRAL). A compositionally biased stretch (basic residues) spans 9 to 19 (RHGREKKRRTD).

Belongs to the universal ribosomal protein uS12 family.

The protein resides in the mitochondrion. Functionally, protein S12 is involved in the translation initiation step. This Pinus sylvestris (Scotch pine) protein is Small ribosomal subunit protein uS12m (RPS12).